The following is a 65-amino-acid chain: Alpha-toxin Lqq4 (65 aa).

The region spanning 3 to 65 (RDAYIADDKN…VPIRIPGKCR (63 aa)) is the LCN-type CS-alpha/beta domain. A specificity module, loop 1 region spans residues 9–13 (DDKNC). Disulfide bonds link cysteine 13–cysteine 64, cysteine 17–cysteine 37, cysteine 23–cysteine 47, and cysteine 27–cysteine 49. 2 specificity module, loop regions span residues 40 to 44 (LGKYG) and 57 to 65 (PIRIPGKCR). Arginine 65 carries the post-translational modification Arginine amide.

This sequence belongs to the long (4 C-C) scorpion toxin superfamily. Sodium channel inhibitor family. Alpha subfamily. In terms of processing, the recombinant toxin which is used for activity tests is not amidated. However, C-terminal amidation does not appear to play an important role in activity, since the non-amidated recombinant toxin and the native toxin (which is amidated) show similar activities on all sodium channels tested. Expressed by the venom gland.

Its subcellular location is the secreted. Its function is as follows. Alpha toxins bind voltage-independently at site-3 of sodium channels (Nav) and inhibit the inactivation of the activated channels, thereby blocking neuronal transmission. Both native and recombinant (non-amidated) toxins inhibit inactivation of Nav1.2/SCN2A (EC(50)=31.2-36.6 nM), Nav1.6/SCN8A (EC(50)=6.9-8.9 nM), and Nav1.7/SCN9A (EC(50)=182.0-260.1 nM). In Leiurus quinquestriatus quinquestriatus (Egyptian scorpion), this protein is Alpha-toxin Lqq4.